A 2635-amino-acid chain; its full sequence is Large tegument protein deneddylase (2635 aa).

The deubiquitination activity stretch occupies residues 1–233; sequence MAAQPLYMEG…LHGPRMDISR (233 aa). One can recognise a Peptidase C76 domain in the interval 9 to 223; that stretch reads EGMASTHQAN…NHYRTIVFEE (215 aa). Residues C29, D159, and H161 contribute to the active site. Disordered stretches follow at residues 243-497, 2238-2269, 2357-2438, and 2500-2533; these read ITSP…DRYA, PLTI…QQPK, RTAL…KRAA, and KAGW…DDKS. The segment covering 245-255 has biased composition (low complexity); sequence SPSVSPAPSEA. 2 stretches are compositionally biased toward basic and acidic residues: residues 256–270 and 282–295; these read PLRR…ETRP and PTDR…DRPP. The segment at 316-325 is interaction with inner tegument protein; the sequence is KTGRGGNEGR. Positions 330-346 are enriched in basic and acidic residues; it reads PPDEHQPPHITAEHMDQ. Residues 448–461 show a composition bias toward low complexity; sequence DDPLTPLYPLTDTP. Residues 2379–2402 show a composition bias toward low complexity; it reads TLTFRLPPTAPTPATAALETKTTP. Basic and acidic residues predominate over residues 2425-2437; the sequence is HARDTSPPAEKRA.

The protein belongs to the herpesviridae large tegument protein family. As to quaternary structure, interacts with host CUL1 and CUL4A; these interactions inhibit the E3 ligase activity of cullins. Interacts with inner tegument protein. Interacts with capsid vertex specific component CVC2. Interacts with the major capsid protein/MCP.

It is found in the virion tegument. Its subcellular location is the host cytoplasm. It localises to the host nucleus. It catalyses the reaction Thiol-dependent hydrolysis of ester, thioester, amide, peptide and isopeptide bonds formed by the C-terminal Gly of ubiquitin (a 76-residue protein attached to proteins as an intracellular targeting signal).. Large tegument protein that plays multiple roles in the viral cycle. During viral entry, remains associated with the capsid while most of the tegument is detached and participates in the capsid transport toward the host nucleus. Plays a role in the routing of the capsid at the nuclear pore complex and subsequent uncoating. Within the host nucleus, acts as a deneddylase and promotes the degradation of nuclear CRLs (cullin-RING ubiquitin ligases) and thereby stabilizes nuclear CRL substrates, while cytoplasmic CRLs remain unaffected. These modifications prevent host cell cycle S-phase progression and create a favorable environment allowing efficient viral genome replication. Participates later in the secondary envelopment of capsids. Indeed, plays a linker role for the association of the outer viral tegument to the capsids together with the inner tegument protein. This Homo sapiens (Human) protein is Large tegument protein deneddylase.